The chain runs to 119 residues: Large ribosomal subunit protein bL20 (119 aa).

Belongs to the bacterial ribosomal protein bL20 family.

Functionally, binds directly to 23S ribosomal RNA and is necessary for the in vitro assembly process of the 50S ribosomal subunit. It is not involved in the protein synthesizing functions of that subunit. The sequence is that of Large ribosomal subunit protein bL20 from Clostridium tetani (strain Massachusetts / E88).